The chain runs to 888 residues: Molybdenum cofactor sulfurase (888 aa).

Serine 34 carries the phosphoserine modification. Position 264 is an N6-(pyridoxal phosphate)lysine (lysine 264). Cysteine 424 is an active-site residue. Serine 528 and serine 530 each carry phosphoserine. Positions 706 to 867 (KQSSNSQRNA…LSVGSQVLPV (162 aa)) constitute an MOSC domain.

It belongs to the class-V pyridoxal-phosphate-dependent aminotransferase family. MOCOS subfamily. It depends on pyridoxal 5'-phosphate as a cofactor.

It carries out the reaction Mo-molybdopterin + L-cysteine + AH2 = thio-Mo-molybdopterin + L-alanine + A + H2O. It functions in the pathway cofactor biosynthesis; molybdopterin biosynthesis. Sulfurates the molybdenum cofactor. Sulfation of molybdenum is essential for xanthine dehydrogenase (XDH) and aldehyde oxidase (ADO) enzymes in which molybdenum cofactor is liganded by 1 oxygen and 1 sulfur atom in active form. In vitro, the C-terminal domain is able to reduce N-hydroxylated prodrugs, such as benzamidoxime. This is Molybdenum cofactor sulfurase from Homo sapiens (Human).